Consider the following 126-residue polypeptide: Small ribosomal subunit protein uS13c (126 aa).

The tract at residues 97-126 is disordered; the sequence is PLRGQRTRTNARTRRGGKKTVAGKKKAPRK. The segment covering 101 to 126 has biased composition (basic residues); that stretch reads QRTRTNARTRRGGKKTVAGKKKAPRK.

This sequence belongs to the universal ribosomal protein uS13 family. In terms of assembly, part of the 30S ribosomal subunit.

It is found in the plastid. The protein localises to the chloroplast. Its function is as follows. Located at the top of the head of the 30S subunit, it contacts several helices of the 16S rRNA. This is Small ribosomal subunit protein uS13c from Pyropia yezoensis (Susabi-nori).